Consider the following 108-residue polypeptide: Small ribosomal subunit protein eS25x (108 aa).

The interval 1 to 36 (MAPKKDKVPPPSSKPAKSGGGKQKKKKWSKGKQKEK) is disordered. The span at 22–31 (KQKKKKWSKG) shows a compositional bias: basic residues.

Belongs to the eukaryotic ribosomal protein eS25 family.

This chain is Small ribosomal subunit protein eS25x (RPS25D), found in Arabidopsis thaliana (Mouse-ear cress).